The chain runs to 428 residues: MLKSVIENVHALEIFDSRGNPTVEVHVTLSNGVVGKAEVPSGASTGENEAVELRDGGSRLGGKGVSKAVNNVNTEINDALKGMDPFDQPKIDQTMIDLDGTPNKGRLGANAILGVSMATAVAAANANRQPLYRYLGGIDLEMPQTFHNVINGGEHADNGIDIQEFMITPIAKTSFRDGFEKIVNVYHTLKKVLEDMGYETGLGDEGGFAPNMKNSEEALKALHESIIKAGYKPGEDIGIACDCAASYFYNKEDGKYHLEGKVLTDDELAAYYDKLLDEFPELMSMEDPYDENDVEGMVKFTATHKDRIQIVLDDFICTNPALLKKAIKEGAGNASLIKLNQIGTVTETLETIRMSRKNGYNTMISHRSGETGDTFIADLAVAINGGQLKTGAPARSERVEKYNRLLEIEEELGKGERLAFFPDDVDHD.

(2R)-2-phosphoglycerate is bound at residue Q163. The active-site Proton donor is E205. Mg(2+) is bound by residues D242, E286, and D313. (2R)-2-phosphoglycerate is bound by residues K338, R367, S368, and K389. K338 serves as the catalytic Proton acceptor.

It belongs to the enolase family. Requires Mg(2+) as cofactor.

It localises to the cytoplasm. The protein localises to the secreted. The protein resides in the cell surface. It catalyses the reaction (2R)-2-phosphoglycerate = phosphoenolpyruvate + H2O. Its pathway is carbohydrate degradation; glycolysis; pyruvate from D-glyceraldehyde 3-phosphate: step 4/5. In terms of biological role, catalyzes the reversible conversion of 2-phosphoglycerate (2-PG) into phosphoenolpyruvate (PEP). It is essential for the degradation of carbohydrates via glycolysis. In Lactobacillus acidophilus (strain ATCC 700396 / NCK56 / N2 / NCFM), this protein is Enolase.